Reading from the N-terminus, the 502-residue chain is Nucleoside transporter 2 (502 aa).

Topologically, residues 1–30 (MTTSSDSAMVNHTPSPWYKFGFKSFAEFNT) are cytoplasmic. Residues 31 to 51 (YVTFVFLGMSIMMVASAVTSA) form a helical membrane-spanning segment. The Extracellular portion of the chain corresponds to 52-81 (PDFLTRYYVYATGDPDAVAETPLFWNNANT). Residues 82 to 102 (FYNAGTYVLQVLTELFSLTPF) traverse the membrane as a helical segment. The Cytoplasmic segment spans residues 103-111 (MRRIPLSVR). Residues 112-132 (LFVGLGIPFAELLLIIIVPAA) traverse the membrane as a helical segment. Residues 133–137 (TIKSQ) are Extracellular-facing. The helical transmembrane segment at 138–158 (HGAIAVIMVVACVGGFSKALC) threads the bilayer. At 159-178 (DSCTNALVGPFPTKFMNGAQ) the chain is on the cytoplasmic side. The helical transmembrane segment at 179–199 (WGLTVIALLMSIIQIILKVSM) threads the bilayer. At 200-210 (GTSFHDILTMS) the chain is on the extracellular side. Residues 211–231 (RIYFGICIGIQLFAIFELAIL) form a helical membrane-spanning segment. Topologically, residues 232–352 (RFNPFAQKYI…SVFKRVYPML (121 aa)) are cytoplasmic. The interval 252–273 (AQNNESTLEETAPSMNEPAAGD) is disordered. The helical transmembrane segment at 353 to 373 (VCVFLIYFTSLLTFPGVFFLV) threads the bilayer. The Extracellular segment spans residues 374-380 (STTSGWY). The helical transmembrane segment at 381–401 (MTVIVTLFNAGDFISRMVLMF) threads the bilayer. Residues 402 to 408 (RPLRPSP) lie on the Cytoplasmic side of the membrane. Residues 409–429 (KVVVAGTLGRLIIIPFLVLCV) form a helical membrane-spanning segment. Residues 430–436 (RGIIRGE) are Extracellular-facing. Residues 437 to 457 (ALPYVLITLLGLTNGYFGCMA) form a helical membrane-spanning segment. At 458 to 477 (CIHCPRTTTLRYAGERSLAA) the chain is on the cytoplasmic side. A helical transmembrane segment spans residues 478–498 (MLSGISIMLGLCFGSNLSLAI). Topologically, residues 499–502 (TLTH) are extracellular.

It belongs to the SLC29A/ENT transporter (TC 2.A.57) family.

It localises to the cell membrane. It carries out the reaction inosine(in) = inosine(out). The catalysed reaction is guanosine(in) = guanosine(out). High affinity transporter for inosine and guanosine. The polypeptide is Nucleoside transporter 2 (Crithidia fasciculata).